An 865-amino-acid chain; its full sequence is Alanine--tRNA ligase (865 aa).

Residues histidine 556, histidine 560, cysteine 660, and histidine 664 each coordinate Zn(2+).

Belongs to the class-II aminoacyl-tRNA synthetase family. It depends on Zn(2+) as a cofactor.

It localises to the cytoplasm. The catalysed reaction is tRNA(Ala) + L-alanine + ATP = L-alanyl-tRNA(Ala) + AMP + diphosphate. In terms of biological role, catalyzes the attachment of alanine to tRNA(Ala) in a two-step reaction: alanine is first activated by ATP to form Ala-AMP and then transferred to the acceptor end of tRNA(Ala). Also edits incorrectly charged Ser-tRNA(Ala) and Gly-tRNA(Ala) via its editing domain. The polypeptide is Alanine--tRNA ligase (Vesicomyosocius okutanii subsp. Calyptogena okutanii (strain HA)).